The primary structure comprises 254 residues: 3-deoxy-manno-octulosonate cytidylyltransferase (254 aa).

The protein belongs to the KdsB family.

The protein resides in the cytoplasm. The enzyme catalyses 3-deoxy-alpha-D-manno-oct-2-ulosonate + CTP = CMP-3-deoxy-beta-D-manno-octulosonate + diphosphate. It participates in nucleotide-sugar biosynthesis; CMP-3-deoxy-D-manno-octulosonate biosynthesis; CMP-3-deoxy-D-manno-octulosonate from 3-deoxy-D-manno-octulosonate and CTP: step 1/1. The protein operates within bacterial outer membrane biogenesis; lipopolysaccharide biosynthesis. Its function is as follows. Activates KDO (a required 8-carbon sugar) for incorporation into bacterial lipopolysaccharide in Gram-negative bacteria. The sequence is that of 3-deoxy-manno-octulosonate cytidylyltransferase from Pseudomonas entomophila (strain L48).